The primary structure comprises 518 residues: T-box transcription factor TBX5 (518 aa).

Residues 1 to 46 (MADADEGFGLAHTPLEPDAKDLPCDSKPESALGAPSKSPSSPQAAF) form a disordered region. Basic and acidic residues predominate over residues 15–28 (LEPDAKDLPCDSKP). The segment covering 34–45 (APSKSPSSPQAA) has biased composition (low complexity). The segment at residues 58-238 (LHERELWLKF…NNPFAKGFRG (181 aa)) is a DNA-binding region (T-box). Positions 250–356 (MQSKEYPVVP…PSEEDSFYRS (107 aa)) are disordered. A compositionally biased stretch (polar residues) spans 262–301 (TVRQKVASNHSPFSSESRALSTSSNLGSQYQCENGVSGPS). Residue Lys339 is modified to N6-acetyllysine.

Monomer. Homodimer (via the T-box); binds DNA as homodimer. Interacts (via the T-box) with NKX2-5 (via the homeobox); this complex binds DNA. Interacts with GATA4. Interacts with KAT2A and KAT2B. Post-translationally, acetylation at Lys-339 by KAT2A and KAT2B promotes nuclear retention.

It is found in the nucleus. It localises to the cytoplasm. DNA-binding protein that regulates the transcription of several genes and is involved in heart development and limb pattern formation. Binds to the core DNA motif of NPPA promoter. The polypeptide is T-box transcription factor TBX5 (TBX5) (Homo sapiens (Human)).